The sequence spans 256 residues: Probable aquaporin TIP5-1 (256 aa).

At M1 the chain carries N-acetylmethionine. The next 5 helical transmembrane spans lie at 24-44 (CYVSEFISTFFFVLAAVGSVM), 57-77 (PFGVLIPAIANALALSSSVYI), 89-109 (AVTFAMAVAGRISVPTAMFYW), 144-164 (FGASVLEGVLAFVLVYTVFTA), and 171-191 (LPLAVGPIFIGFVAGANVLAA). An NPA 1 motif is present at residues 87–89 (NPA). The NPA 2 motif lies at 200–202 (NPA). Residues 222–242 (VGPLLGGATAALVYDNVVVPV) traverse the membrane as a helical segment. S249 bears the Phosphoserine mark.

This sequence belongs to the MIP/aquaporin (TC 1.A.8) family. TIP (TC 1.A.8.10) subfamily.

Its subcellular location is the membrane. Its function is as follows. Potential aquaporin, which may facilitate the transport of water and small neutral solutes across cell membranes. This chain is Probable aquaporin TIP5-1 (TIP5-1), found in Arabidopsis thaliana (Mouse-ear cress).